Here is a 1107-residue protein sequence, read N- to C-terminus: Rho GTPase-activating protein 45 (1107 aa).

The interval Met-1 to Phe-99 is disordered. The span at Asp-37–Ser-55 shows a compositional bias: low complexity. Over residues Gly-56–Arg-66 the composition is skewed to polar residues. 2 coiled-coil regions span residues Glu-103–Lys-132 and Asn-363–Gln-485. The F-BAR domain occupies Glu-261–Gln-524. Basic and acidic residues-rich tracts occupy residues Asn-414–Ser-423, Arg-434–Ala-444, and Glu-573–Gly-588. 2 disordered regions span residues Asn-414–Ala-444 and Phe-564–His-595. A Phorbol-ester/DAG-type zinc finger spans residues Thr-671–Cys-716. The Rho-GAP domain maps to Arg-730–Phe-942. The disordered stretch occupies residues Leu-981–Pro-1036. The segment covering Lys-1015 to Ser-1031 has biased composition (polar residues).

The protein resides in the cytoplasm. The protein localises to the cell projection. It localises to the ruffle membrane. Contains a GTPase activator for the Rho-type GTPases (RhoGAP) domain that would be able to negatively regulate the actin cytoskeleton as well as cell spreading. However, also contains N-terminally a BAR-domin which is able to play an autoinhibitory effect on this RhoGAP activity. This Xenopus laevis (African clawed frog) protein is Rho GTPase-activating protein 45.